Consider the following 201-residue polypeptide: Recombination protein RecR (201 aa).

The C4-type zinc-finger motif lies at 60-75; it reads CSECGNMDVSDPCTVC. One can recognise a Toprim domain in the interval 83–178; sequence AAICVVETVG…SITSLARGVP (96 aa).

The protein belongs to the RecR family.

Functionally, may play a role in DNA repair. It seems to be involved in an RecBC-independent recombinational process of DNA repair. It may act with RecF and RecO. In Maricaulis maris (strain MCS10) (Caulobacter maris), this protein is Recombination protein RecR.